The following is a 356-amino-acid chain: Tyrosine recombinase XerS (356 aa).

The Core-binding (CB) domain occupies 16-121 (IMPWYVLDYY…ALSSLYKYLT (106 aa)). Residues 169–354 (AFLDYVDKEY…VNDEQKTALD (186 aa)) enclose the Tyr recombinase domain. Catalysis depends on residues Arg210, Lys234, His306, Arg309, and His332. Catalysis depends on Tyr341, which acts as the O-(3'-phospho-DNA)-tyrosine intermediate.

The protein belongs to the 'phage' integrase family. XerS subfamily.

It is found in the cytoplasm. Its activity is regulated as follows. FtsK is required for recombination. Site-specific tyrosine recombinase, which acts by catalyzing the cutting and rejoining of the recombining DNA molecules. Essential to convert dimers of the bacterial chromosome into monomers to permit their segregation at cell division. The sequence is that of Tyrosine recombinase XerS from Streptococcus pyogenes serotype M12 (strain MGAS9429).